A 552-amino-acid chain; its full sequence is Cytochrome P450 97B1, chloroplastic (552 aa).

The transit peptide at 1–52 (MVAAPISTVKLTDANLHTRFHSSSSSTPSTLSLPLSLHFHFSSHSKRFSSIR) directs the protein to the chloroplast. Cys528 is a binding site for heme.

It belongs to the cytochrome P450 family. The cofactor is heme.

It localises to the plastid. It is found in the chloroplast membrane. The polypeptide is Cytochrome P450 97B1, chloroplastic (CYP97B1) (Pisum sativum (Garden pea)).